A 378-amino-acid chain; its full sequence is T-cell immunoglobulin and mucin domain-containing protein 4 (378 aa).

An N-terminal signal peptide occupies residues Met-1–Ser-24. Residues Glu-25–Asn-126 enclose the Ig-like V-type domain. The Extracellular segment spans residues Glu-25 to Gln-314. Disulfide bonds link Cys-40/Cys-112, Cys-53/Cys-64, and Cys-59/Cys-111. Disordered stretches follow at residues Thr-136 to Met-160 and Trp-269 to Met-304. A compositionally biased stretch (polar residues) spans Trp-269–Gly-297. N-linked (GlcNAc...) asparagine glycosylation occurs at Asn-291. Residues Leu-315–Leu-335 traverse the membrane as a helical segment. Topologically, residues Leu-336–Leu-378 are cytoplasmic. Ser-358 is subject to Phosphoserine.

Belongs to the immunoglobulin superfamily. TIM family. As to quaternary structure, interacts with MERTK; this interaction enhances TIMD4-mediated efferocytosis. Interacts with EPHA2.

The protein localises to the cell membrane. It is found in the secreted. Its subcellular location is the extracellular exosome. Phosphatidylserine receptor that plays different role in immune response including phagocytosis of apoptotic cells and T-cell regulation. Controls T-cell activation in a bimodal fashion, decreasing the activation of naive T-cells by inducing cell cycle arrest, while increasing proliferation of activated T-cells by activating AKT1 and ERK1/2 phosphorylations and subsequent signaling pathways. Also plays a role in efferocytosis which is the process by which apoptotic cells are removed by phagocytic cells. Mechanistically, promotes the engulfment of apoptotic cells or exogenous particles by securing them to phagocytes through direct binding to phosphatidylserine present on apoptotic cells, while other engulfment receptors such as MERTK efficiently recognize apoptotic cells and mediate their ingestion. Additionally, promotes autophagy process by suppressing NLRP3 inflammasome activity via activation of LKB1/PRKAA1 pathway in a phosphatidylserine-dependent mechanism. Functionally, (Microbial infection) Plays a positive role in exosome-mediated trafficking of HIV-1 virus and its entry into immune cells. The polypeptide is T-cell immunoglobulin and mucin domain-containing protein 4 (TIMD4) (Homo sapiens (Human)).